The sequence spans 112 residues: Conotoxin vil14.4 (112 aa).

Residues 1–22 form the signal peptide; the sequence is MGFRVLVLVVMATTSALPFTFF. The propeptide occupies 23 to 85; that stretch reads EEPGRSPFRP…FAELSVGQRR (63 aa). Intrachain disulfides connect cysteine 91–cysteine 111 and cysteine 95–cysteine 107.

Belongs to the conotoxin R superfamily. As to expression, expressed by the venom duct.

The protein resides in the secreted. The sequence is that of Conotoxin vil14.4 from Conus villepinii (Villepin's cone).